A 399-amino-acid polypeptide reads, in one-letter code: Dual specificity mitogen-activated protein kinase kinase 4 (399 aa).

The disordered stretch occupies residues 1–40 (MAAPSPSGGGGSGGGSGSGTPGPVGSPAPGHPAVSSMQGK). Alanine 2 is subject to N-acetylalanine. The span at 7-22 (SGGGGSGGGSGSGTPG) shows a compositional bias: gly residues. Residues 37–52 (MQGKRKALKLNFANPP) form a d domain region. An Asymmetric dimethylarginine; alternate modification is found at arginine 58. Omega-N-methylarginine; alternate is present on arginine 58. Phosphoserine is present on serine 90. The Protein kinase domain occupies 102-367 (LKDLGEIGRG…YKELLKHPFI (266 aa)). Residues 108-116 (IGRGAYGSV) and lysine 131 contribute to the ATP site. Aspartate 229 functions as the Proton acceptor in the catalytic mechanism. Residue serine 257 is modified to Phosphoserine; by MAP3K. Threonine 261 carries the phosphothreonine; by MAP3K modification. Positions 364 to 387 (HPFILMYEERAVEVACYVCKILDQ) are DVD domain.

It belongs to the protein kinase superfamily. STE Ser/Thr protein kinase family. MAP kinase kinase subfamily. In terms of assembly, interacts with SPAG9. Interacts (via its D domain) with its substrates MAPK8/JNK1, MAPK9/JNK2, MAPK10/JNK3, MAPK11 and MAPK14. Interacts (via its DVD domain) with MAP3Ks activators like MAP3K1/MEKK1 and MAP3K11/MLK3. Interacts with ARRB1, ARRB2 and MAPK8IP3/JIP3. Activated by phosphorylation on Ser-257 and Thr-261 by MAP kinase kinase kinases (MAP3Ks). Abundant expression is seen in the skeletal muscle. It is also widely expressed in other tissues.

The protein resides in the cytoplasm. The protein localises to the nucleus. It carries out the reaction L-seryl-[protein] + ATP = O-phospho-L-seryl-[protein] + ADP + H(+). The enzyme catalyses L-threonyl-[protein] + ATP = O-phospho-L-threonyl-[protein] + ADP + H(+). It catalyses the reaction L-tyrosyl-[protein] + ATP = O-phospho-L-tyrosyl-[protein] + ADP + H(+). Activated in response to a variety of cellular stresses, including UV and gamma-irradiation, heat shock, hyperosmolarity, T-cell receptor stimulation, peroxide and inflammatory cytokines. Also activated by developmental cues. MAP2K4/MKK4 is activated by the majority of MKKKs, such as MAP3K5/ASK1, MAP3K1/MEKK1, MAP3K7/TAK1, MAP3K10/MLK2, MAP3K11/MLK3, MAP3K12/DLK and MAP3K13/LZK. Functionally, dual specificity protein kinase which acts as an essential component of the MAP kinase signal transduction pathway. Essential component of the stress-activated protein kinase/c-Jun N-terminal kinase (SAP/JNK) signaling pathway. With MAP2K7/MKK7, is the one of the only known kinase to directly activate the stress-activated protein kinase/c-Jun N-terminal kinases MAPK8/JNK1, MAPK9/JNK2 and MAPK10/JNK3. MAP2K4/MKK4 and MAP2K7/MKK7 both activate the JNKs by phosphorylation, but they differ in their preference for the phosphorylation site in the Thr-Pro-Tyr motif. MAP2K4 shows preference for phosphorylation of the Tyr residue and MAP2K7/MKK7 for the Thr residue. The phosphorylation of the Thr residue by MAP2K7/MKK7 seems to be the prerequisite for JNK activation at least in response to pro-inflammatory cytokines, while other stimuli activate both MAP2K4/MKK4 and MAP2K7/MKK7 which synergistically phosphorylate JNKs. MAP2K4 is required for maintaining peripheral lymphoid homeostasis. The MKK/JNK signaling pathway is also involved in mitochondrial death signaling pathway, including the release cytochrome c, leading to apoptosis. Whereas MAP2K7/MKK7 exclusively activates JNKs, MAP2K4/MKK4 additionally activates the p38 MAPKs MAPK11, MAPK12, MAPK13 and MAPK14. The protein is Dual specificity mitogen-activated protein kinase kinase 4 (MAP2K4) of Homo sapiens (Human).